The primary structure comprises 569 residues: MNWQGWAEIALTLGLAVAIGWPLGVYMSRVWNGERTWLDPVLRPVEAVFYKAGGIDAQKSQSWWGYAGALLAFNFVGFLLVYAVLRLQGVLPMNPQGFSGLSGHLSFNTAISFVTNTNWQSYAGETTMSTLSQMLVLTVQNFLSAATGATVAAALARAFVANRGEGVGNFWADLVRTTLYVLLPLSFVVAIVLVALGLPQTLAAGVTAHTLEGADQKISLYAVASQEAIKMLGINGGGVFNANSAHPFENPTPLTNLITAVSINVLGWAAFFAFGRSVLAKKDIRALVIAASILLSAGAATVYWTETQVAPAQVAAQVDTSVNMEGKETRFGAPATAAWVAMTTGASNGSVNGMHSSLMPLGGGMAMFLMHLGEILPGGIGSGIAVMIVMAVLAVFVAGLMVGRTPEYLGKKIEAREVQLALLTVLAIPVATLGFSAIAAVLPEALKGLMHSGPHGMSEILYAYTSATANNGSAFAGLTANAPWWDTTMGVAMAMGRFMPIVAVLAMAGSLVGKPKLAPSAGTLPTHGGLFVGLLIGVILILGGLQFFPALALGPIVEHFQVLAAVAGH.

10 helical membrane passes run 5–25 (GWAE…PLGV), 65–85 (GYAG…YAVL), 135–155 (LVLT…AAAL), 179–199 (LYVL…LGLP), 254–274 (LTNL…FFAF), 286–306 (ALVI…YWTE), 383–403 (GIAV…LMVG), 422–442 (LLTV…AAVL), 489–509 (MGVA…AMAG), and 528–548 (GGLF…LQFF).

The protein belongs to the KdpA family. In terms of assembly, the system is composed of three essential subunits: KdpA, KdpB and KdpC.

The protein localises to the cell inner membrane. Part of the high-affinity ATP-driven potassium transport (or Kdp) system, which catalyzes the hydrolysis of ATP coupled with the electrogenic transport of potassium into the cytoplasm. This subunit binds the periplasmic potassium ions and delivers the ions to the membrane domain of KdpB through an intramembrane tunnel. This is Potassium-transporting ATPase potassium-binding subunit from Caulobacter sp. (strain K31).